The chain runs to 423 residues: MATPMAEDSNFEDDQLHAMSTEDIIRASRLLDNEIRIIKEELQRTNLELDSFKEKIKENQEKIKLNKQLPYLVGNIVEILEMNPEEEAEEDGANIDLDSQRKGKCVVLKTSTRQTIFLPVVGLVDPDNLKPGDLVGVNKDSYLILDTLPSEYDSRVKAMEVDEKPTEDYHDIGGLEKQIQELVEAIVLPMTHQERFQKLGVRPPKGVLLYGPPGTGKTLMARACAAQTNATFLKLAGPQLVQMFIGDGAKLVRDAFQLAKEKSPCIIFIDEIDAIGTKRFDSEVSGDREVQRTMLELLNQLDGFSSDDRIKVIAATNRADILDPALMRSGRLDRKIEFPHPTEEARARILQIHSRKMNVNPDVNFEELARSTDDFNGAQLKAVCVEAGMLALRRDATEVTHEDFNEGIIQVQAKKKASLNYYA.

An ATP-binding site is contributed by 211-218; the sequence is GPPGTGKT.

Belongs to the AAA ATPase family.

It is found in the cytoplasm. Its subcellular location is the nucleus. In terms of biological role, the 26S proteasome is involved in the ATP-dependent degradation of ubiquitinated proteins. The regulatory (or ATPase) complex confers ATP dependency and substrate specificity to the 26S complex. The protein is 26S proteasome regulatory subunit 6A homolog (TBP1) of Solanum lycopersicum (Tomato).